The sequence spans 187 residues: UPF0301 protein Sputcn32_2681 (187 aa).

This sequence belongs to the UPF0301 (AlgH) family.

This Shewanella putrefaciens (strain CN-32 / ATCC BAA-453) protein is UPF0301 protein Sputcn32_2681.